A 146-amino-acid polypeptide reads, in one-letter code: Snaclec 5 (146 aa).

The N-terminal stretch at 1–23 is a signal peptide; the sequence is MGRFIFISFGLLVVFLSLSGTEA. Disulfide bonds link C25–C36, C53–C142, and C119–C134. Residues 32–143 enclose the C-type lectin domain; the sequence is YEGHCYRVFD…CRNYGHFVCK (112 aa).

The protein belongs to the snaclec family. As to quaternary structure, heterodimer; disulfide-linked. Expressed by the venom gland.

It is found in the secreted. Functionally, interferes with one step of hemostasis (modulation of platelet aggregation, or coagulation cascade, for example). This is Snaclec 5 from Echis pyramidum leakeyi (Leakey's carpet viper).